The primary structure comprises 294 residues: Phosphatidylserine decarboxylase proenzyme (294 aa).

Active-site charge relay system; for autoendoproteolytic cleavage activity residues include D92, H149, and S252. The Schiff-base intermediate with substrate; via pyruvic acid; for decarboxylase activity role is filled by S252. A Pyruvic acid (Ser); by autocatalysis modification is found at S252.

Belongs to the phosphatidylserine decarboxylase family. PSD-B subfamily. Prokaryotic type I sub-subfamily. In terms of assembly, heterodimer of a large membrane-associated beta subunit and a small pyruvoyl-containing alpha subunit. Pyruvate serves as cofactor. Is synthesized initially as an inactive proenzyme. Formation of the active enzyme involves a self-maturation process in which the active site pyruvoyl group is generated from an internal serine residue via an autocatalytic post-translational modification. Two non-identical subunits are generated from the proenzyme in this reaction, and the pyruvate is formed at the N-terminus of the alpha chain, which is derived from the carboxyl end of the proenzyme. The autoendoproteolytic cleavage occurs by a canonical serine protease mechanism, in which the side chain hydroxyl group of the serine supplies its oxygen atom to form the C-terminus of the beta chain, while the remainder of the serine residue undergoes an oxidative deamination to produce ammonia and the pyruvoyl prosthetic group on the alpha chain. During this reaction, the Ser that is part of the protease active site of the proenzyme becomes the pyruvoyl prosthetic group, which constitutes an essential element of the active site of the mature decarboxylase.

It is found in the cell membrane. The enzyme catalyses a 1,2-diacyl-sn-glycero-3-phospho-L-serine + H(+) = a 1,2-diacyl-sn-glycero-3-phosphoethanolamine + CO2. The protein operates within phospholipid metabolism; phosphatidylethanolamine biosynthesis; phosphatidylethanolamine from CDP-diacylglycerol: step 2/2. Its function is as follows. Catalyzes the formation of phosphatidylethanolamine (PtdEtn) from phosphatidylserine (PtdSer). The protein is Phosphatidylserine decarboxylase proenzyme of Bordetella avium (strain 197N).